The following is a 349-amino-acid chain: MSKETLILLYGGRSAEREVSVLSAESVMRAVNYSRFIVKTYFITKGGEFIKTQEFTDTPAEEEKLLTNDLAESYPKISPAAIYEKDAVVFPVLHGPMGEDGSIQGFLEILRLAYVGPNILSASSTMDKLLAKHVFEAVGVPQVPYVAAFADENQAEIAQEVVEKLEFPVFVKPANMGSSVGISKVDDLADLQPALSEAYKYDNRVVIEQGVDAREIECAVLGNNSDVSATLPGEVVKDVGFYDYNSKYIDNKIQMDIPAKVSADLAQKIQEYAKKAYKAVNGAGLSRCDFFVTKDGNVYLNEVNAIPGFTQWSMYPLLWENMGLSYSDLIEKLVDLAKETFETRENHLL.

The ATP-grasp domain occupies 132 to 335 (KHVFEAVGVP…YSDLIEKLVD (204 aa)). 162 to 217 (VEKLEFPVFVKPANMGSSVGISKVDDLADLQPALSEAYKYDNRVVIEQGVDAREIE) serves as a coordination point for ATP. The Mg(2+) site is built by Asp289, Glu302, and Asn304.

This sequence belongs to the D-alanine--D-alanine ligase family. Mg(2+) serves as cofactor. It depends on Mn(2+) as a cofactor.

It is found in the cytoplasm. It catalyses the reaction 2 D-alanine + ATP = D-alanyl-D-alanine + ADP + phosphate + H(+). The protein operates within cell wall biogenesis; peptidoglycan biosynthesis. In terms of biological role, cell wall formation. The polypeptide is D-alanine--D-alanine ligase (Lactococcus lactis subsp. cremoris (strain SK11)).